An 84-amino-acid chain; its full sequence is Mu-Sparatoxin-Hp1 (84 aa).

The first 20 residues, 1 to 20 (MKIAIVMTLLLVAFSTASFA), serve as a signal peptide directing secretion. Residues 21-35 (IEPIERAALDLVMAR) constitute a propeptide that is removed on maturation. 3 cysteine pairs are disulfide-bonded: cysteine 54-cysteine 68, cysteine 61-cysteine 73, and cysteine 67-cysteine 78. Residue leucine 82 is modified to Leucine amide.

As to expression, expressed by the venom gland.

It is found in the secreted. Its function is as follows. Weakly nhibits voltage-gated sodium channels Nav1.7/SCN9A. High concentration of the toxin (3 uM) inhibits Nav1.7/SCN9A currents by 79%. This is Mu-Sparatoxin-Hp1 from Heteropoda pingtungensis (Pingtung huntsman spider).